Consider the following 60-residue polypeptide: Large ribosomal subunit protein uL30 (60 aa).

Belongs to the universal ribosomal protein uL30 family. Part of the 50S ribosomal subunit.

The polypeptide is Large ribosomal subunit protein uL30 (Acidothermus cellulolyticus (strain ATCC 43068 / DSM 8971 / 11B)).